We begin with the raw amino-acid sequence, 937 residues long: Chromatin assembly factor 1 subunit A (937 aa).

The interval 21–69 is disordered; it reads RLPFKRLNPVPKEKHDAEAEGKKGKCSKSGLGQSKDSSTDTLHASTDNM. The segment covering 31–43 has biased composition (basic and acidic residues); it reads PKEKHDAEAEGKK. Residues 59–69 show a composition bias toward polar residues; it reads TDTLHASTDNM. Residues 213 to 226 carry the PxVxL motif motif; it reads FEGKMPVVLLEDIM. Disordered stretches follow at residues 250 to 386, 574 to 614, 753 to 778, 831 to 851, and 910 to 937; these read SHEG…EKRK, VDSD…IPHG, GDTS…VPSK, SGKE…TPVS, and TVTE…SNTV. Positions 255–269 are enriched in low complexity; that stretch reads SVLTNSSLSSLSVSS. Basic and acidic residues predominate over residues 301–386; that stretch reads SSAEKEKLRL…KLRVKEEKRK (86 aa). Acidic residues-rich tracts occupy residues 574–586 and 594–608; these read VDSD…EEPG and GDDE…DDDG. Over residues 756–766 the composition is skewed to polar residues; it reads SPVSPNTSRPQ.

This sequence belongs to the CHAF1A family. Subunit of the CAF-1 complex that contains RBBP4, CHAF1B and CHAF1A. Interacts with CHAF1B, PCNA and RBBP4.

The protein localises to the nucleus. Acts as a component of the histone chaperone complex chromatin assembly factor 1 (CAF-1), which assembles histone octamers onto DNA during replication and repair. CAF-1 performs the first step of the nucleosome assembly process, bringing newly synthesized histones H3 and H4 to replicating DNA; histones H2A/H2B can bind to this chromatin precursor subsequent to DNA replication to complete the histone octamer. In Gallus gallus (Chicken), this protein is Chromatin assembly factor 1 subunit A (CHAF1A).